Consider the following 1367-residue polypeptide: MAP3K epsilon protein kinase 2 (1367 aa).

Residues 20-274 (YMLGDEIGKG…AKTLLSHPWI (255 aa)) form the Protein kinase domain. HEAT repeat units follow at residues 25–62 (EIGKGAYGRVYIGLDLENGDFVAIKQVSLENIGQEDLN) and 86–125 (LKTKTHLHIILEYVENGSLANIIKPNKFGPFPESLVTVYI). ATP is bound by residues 26 to 34 (IGKGAYGRV) and K49. D144 acts as the Proton acceptor in catalysis. Residues 218–256 (PYYDLQPMPALYRIVQDDTPPIPDSLSPDITDFLRLCFK) form an HEAT 3 repeat. 2 disordered regions span residues 285-422 (LRHS…GRRN) and 437-513 (SSHS…VADG). Over residues 293–306 (YMKETDSSSEKDAE) the composition is skewed to basic and acidic residues. Residues 351-363 (LGEEGTDSEDDIN) show a composition bias toward acidic residues. Residues 378 to 396 (RQSGTCSISSDAKGTSQDV) are compositionally biased toward polar residues. 2 stretches are compositionally biased toward basic and acidic residues: residues 397-408 (LENHEKYDRDEI) and 475-491 (SLHDLFHPLDKVPEGKT). A compositionally biased stretch (polar residues) spans 492–507 (NEASTSTPTANVNQGD). HEAT repeat units follow at residues 538-576 (SQDGGDLFRLMMGVLKDDVLNIDDLVFDEKVPPENLFPL), 577-614 (QAVEFSRLVSSLRPDESEDAIVTSSLKLVAMFRQRPGQ), 633-658 (IPKSRVICAVLQLINEIVKDNTDFLE), 659-700 (NACL…SSPL), and 704-742 (MFISCRGIPVLVGFLEADYAKHREMVHLAIDGMWQVFKL). Residues 792–860 (PRARSGQLDP…LHPDGDRPRL (69 aa)) form a disordered region. Polar residues-rich tracts occupy residues 799 to 814 (LDPNNPIFSQRETSPS) and 835 to 845 (ALTSNSQSSDV). The segment covering 846 to 859 (HQPDALHPDGDRPR) has biased composition (basic and acidic residues). 10 HEAT repeats span residues 850-888 (ALHPDGDRPRLSSVVADATEDVIQQHRISLSANRTSTDK), 906-943 (DQVRPLLSLLEKEPPSRKISGQLDYVKHIAGIERHESR), 1045-1066 (DYLEKVADLLLEFARAETTVKS), 1067-1105 (YMCSQSLLSRLFQMFNRVEPPILLKILECTNHLSTDPNC), 1112-1150 (ADAIKQLIPNLELKEGPLVYQIHHEVLSALFNLCKINKR), 1154-1191 (QAAENGIIPHLMLFVMSDSPLKQYALPLLCDMAHASRN), 1196-1236 (LRAH…KVEQ), 1257-1280 (RHFVHILEPFLKIITKSSSINKTL), 1281-1317 (ALNGLTPLLIARLDHQDAIARLNLLKLIKAVYEKHPK), and 1347-1367 (QVLVKQMATSLLKALHINTIL).

The protein belongs to the protein kinase superfamily. Ser/Thr protein kinase family. Post-translationally, autophosphorylated. Expressed in both the sporophytic and the gametophytic tissues, especially in dividing cells. Mostly present in flower buds and mature flowers. Also accumulates in embryos and in roots.

The protein resides in the cytoplasm. The protein localises to the cytoskeleton. It localises to the microtubule organizing center. Its subcellular location is the nucleus. It is found in the nucleolus. The protein resides in the cell membrane. The catalysed reaction is L-seryl-[protein] + ATP = O-phospho-L-seryl-[protein] + ADP + H(+). It carries out the reaction L-threonyl-[protein] + ATP = O-phospho-L-threonyl-[protein] + ADP + H(+). Serine/threonine-protein kinase involved in the spatial and temporal control system organizing cortical activities in mitotic and postmitotic cells. Required for the normal functioning of the plasma membrane in developing pollen. Involved in the regulation of cell expansion and embryo development. This chain is MAP3K epsilon protein kinase 2, found in Arabidopsis thaliana (Mouse-ear cress).